We begin with the raw amino-acid sequence, 221 residues long: Ribosomal RNA small subunit methyltransferase G (221 aa).

Positions 78, 83, and 150 each coordinate S-adenosyl-L-methionine.

The protein belongs to the methyltransferase superfamily. RNA methyltransferase RsmG family.

The protein resides in the cytoplasm. In terms of biological role, specifically methylates the N7 position of a guanine in 16S rRNA. This chain is Ribosomal RNA small subunit methyltransferase G, found in Bifidobacterium longum (strain DJO10A).